The sequence spans 58 residues: KappaPI-actitoxin-Avd3c (58 aa).

One can recognise a BPTI/Kunitz inhibitor domain in the interval 5 to 55; that stretch reads CLLPMDVGRCRARHPRYYYNSSSRRCEKFIYGGCRGNANNFITKKECEKVC. Disulfide bonds link cysteine 5-cysteine 55, cysteine 14-cysteine 38, and cysteine 30-cysteine 51.

This sequence belongs to the venom Kunitz-type family. Sea anemone type 2 potassium channel toxin subfamily.

The protein resides in the secreted. It is found in the nematocyst. Its function is as follows. Dual-function toxin that inhibits both the serine protease trypsin (Kd&lt;30 nM) and voltage-gated potassium channels Kv1.2/KCNA2 (IC(50)=1100 nM). This Anemonia sulcata (Mediterranean snakelocks sea anemone) protein is KappaPI-actitoxin-Avd3c.